The sequence spans 766 residues: Deoxynucleotidyltransferase terminal-interacting protein 2 (766 aa).

The interval M1–D99 is disordered. Composition is skewed to polar residues over residues N13–V28 and S42–E56. Residue T127 is modified to Phosphothreonine. A phosphoserine mark is found at S139, S143, and S146. Positions T155–H175 are disordered. Residues S166–H175 show a composition bias toward basic and acidic residues. 2 positions are modified to phosphoserine: S180 and S190. K217 participates in a covalent cross-link: Glycyl lysine isopeptide (Lys-Gly) (interchain with G-Cter in SUMO2). The residue at position 229 (T229) is a Phosphothreonine. Phosphoserine is present on residues S236, S248, and S250. Residue K254 forms a Glycyl lysine isopeptide (Lys-Gly) (interchain with G-Cter in SUMO2) linkage. The residue at position 258 (S258) is a Phosphoserine. Residue K327 forms a Glycyl lysine isopeptide (Lys-Gly) (interchain with G-Cter in SUMO2) linkage. The residue at position 334 (S334) is a Phosphoserine. Disordered stretches follow at residues V345–E367, K390–S450, and K520–N557. K394 is covalently cross-linked (Glycyl lysine isopeptide (Lys-Gly) (interchain with G-Cter in SUMO2)). Positions D421–T434 are enriched in basic and acidic residues. The segment covering K435 to T444 has biased composition (polar residues). Positions L515–F552 form a coiled coil. Residues K520 to S542 show a composition bias toward acidic residues. Residues L558–Q615 form a tdBR region; mediates interaction with DNTT region. Glycyl lysine isopeptide (Lys-Gly) (interchain with G-Cter in SUMO2) cross-links involve residues K568, K594, and K616. At T620 the chain carries Phosphothreonine. Glycyl lysine isopeptide (Lys-Gly) (interchain with G-Cter in SUMO2) cross-links involve residues K636, K659, K668, K696, and K741.

As to quaternary structure, forms a ternary complex with DNTT and core histone; interaction with PCNA releases DNTT and H2A/H2B histones from this ternary complex. Interacts with ESR1, ESR2, PPARG and RXRA. Part of the small subunit (SSU) processome, composed of more than 70 proteins and the RNA chaperone small nucleolar RNA (snoRNA) U3.

It localises to the nucleus. The protein resides in the nucleolus. Its function is as follows. Regulates the transcriptional activity of DNTT and ESR1. May function as a chromatin remodeling protein. Part of the small subunit (SSU) processome, first precursor of the small eukaryotic ribosomal subunit. During the assembly of the SSU processome in the nucleolus, many ribosome biogenesis factors, an RNA chaperone and ribosomal proteins associate with the nascent pre-rRNA and work in concert to generate RNA folding, modifications, rearrangements and cleavage as well as targeted degradation of pre-ribosomal RNA by the RNA exosome. The chain is Deoxynucleotidyltransferase terminal-interacting protein 2 (DNTTIP2) from Bos taurus (Bovine).